Reading from the N-terminus, the 382-residue chain is Alkanesulfonate monooxygenase (382 aa).

This sequence belongs to the SsuD family. As to quaternary structure, homotetramer.

It carries out the reaction an alkanesulfonate + FMNH2 + O2 = an aldehyde + FMN + sulfite + H2O + 2 H(+). Functionally, catalyzes the desulfonation of aliphatic sulfonates. The polypeptide is Alkanesulfonate monooxygenase (Yersinia pestis bv. Antiqua (strain Antiqua)).